Consider the following 82-residue polypeptide: Large ribosomal subunit protein bL28 (82 aa).

This sequence belongs to the bacterial ribosomal protein bL28 family.

This is Large ribosomal subunit protein bL28 from Vesicomyosocius okutanii subsp. Calyptogena okutanii (strain HA).